The sequence spans 580 residues: Protein O-linked-mannose beta-1,4-N-acetylglucosaminyltransferase 2 (580 aa).

Over 1 to 4 (MHLS) the chain is Cytoplasmic. A helical; Signal-anchor for type II membrane protein membrane pass occupies residues 5 to 25 (AVFNALLVSVLAAVLWKHVRL). Over 26–580 (REHAATLEEE…PFADVLVCNT (555 aa)) the chain is Lumenal. Residues Asn99 and Asn276 are each glycosylated (N-linked (GlcNAc...) asparagine). One can recognise a Fibronectin type-III domain in the interval 488–580 (ARCQASVHGA…PFADVLVCNT (93 aa)).

It belongs to the glycosyltransferase 61 family.

It localises to the endoplasmic reticulum membrane. The enzyme catalyses 3-O-(alpha-D-mannosyl)-L-threonyl-[protein] + UDP-N-acetyl-alpha-D-glucosamine = 3-O-(N-acetyl-beta-D-glucosaminyl-(1-&gt;4)-alpha-D-mannosyl)-L-threonyl-[protein] + UDP + H(+). Its pathway is protein modification; protein glycosylation. Its function is as follows. O-linked mannose beta-1,4-N-acetylglucosaminyltransferase that transfers UDP-N-acetyl-D-glucosamine to the 4-position of the mannose to generate N-acetyl-D-glucosamine-beta-1,4-O-D-mannosylprotein. Involved in the biosynthesis of the phosphorylated O-mannosyl trisaccharide (N-acetylgalactosamine-beta-3-N-acetylglucosamine-beta-4-(phosphate-6-)mannose), a carbohydrate structure present in alpha-dystroglycan (DAG1), which is required for binding laminin G-like domain-containing extracellular proteins with high affinity. This is Protein O-linked-mannose beta-1,4-N-acetylglucosaminyltransferase 2 (POMGNT2) from Pan troglodytes (Chimpanzee).